The chain runs to 162 residues: NADH-quinone oxidoreductase subunit I (162 aa).

4Fe-4S ferredoxin-type domains are found at residues 54-83 (RRYE…INST) and 93-122 (SSYE…ETNI). [4Fe-4S] cluster contacts are provided by Cys-63, Cys-66, Cys-69, Cys-73, Cys-102, Cys-105, Cys-108, and Cys-112.

This sequence belongs to the complex I 23 kDa subunit family. In terms of assembly, NDH-1 is composed of 14 different subunits. Subunits NuoA, H, J, K, L, M, N constitute the membrane sector of the complex. It depends on [4Fe-4S] cluster as a cofactor.

The protein localises to the cell inner membrane. The enzyme catalyses a quinone + NADH + 5 H(+)(in) = a quinol + NAD(+) + 4 H(+)(out). Its function is as follows. NDH-1 shuttles electrons from NADH, via FMN and iron-sulfur (Fe-S) centers, to quinones in the respiratory chain. The immediate electron acceptor for the enzyme in this species is believed to be ubiquinone. Couples the redox reaction to proton translocation (for every two electrons transferred, four hydrogen ions are translocated across the cytoplasmic membrane), and thus conserves the redox energy in a proton gradient. The protein is NADH-quinone oxidoreductase subunit I of Francisella tularensis subsp. holarctica (strain FTNF002-00 / FTA).